Here is a 243-residue protein sequence, read N- to C-terminus: uncharacterized protein (243 aa).

This is an uncharacterized protein from Caenorhabditis elegans.